Reading from the N-terminus, the 678-residue chain is DNA ligase (678 aa).

NAD(+) contacts are provided by residues aspartate 35–aspartate 39, serine 84–leucine 85, and glutamate 116. Residue lysine 118 is the N6-AMP-lysine intermediate of the active site. NAD(+) contacts are provided by arginine 139, glutamate 178, lysine 297, and lysine 321. Residues cysteine 415, cysteine 418, cysteine 433, and cysteine 438 each coordinate Zn(2+). A BRCT domain is found at aspartate 600–glutamate 678.

Belongs to the NAD-dependent DNA ligase family. LigA subfamily. Requires Mg(2+) as cofactor. The cofactor is Mn(2+).

It carries out the reaction NAD(+) + (deoxyribonucleotide)n-3'-hydroxyl + 5'-phospho-(deoxyribonucleotide)m = (deoxyribonucleotide)n+m + AMP + beta-nicotinamide D-nucleotide.. DNA ligase that catalyzes the formation of phosphodiester linkages between 5'-phosphoryl and 3'-hydroxyl groups in double-stranded DNA using NAD as a coenzyme and as the energy source for the reaction. It is essential for DNA replication and repair of damaged DNA. The chain is DNA ligase from Nostoc punctiforme (strain ATCC 29133 / PCC 73102).